A 491-amino-acid polypeptide reads, in one-letter code: Keratin, type II microfibrillar, component 7C (491 aa).

Blocked amino end (Cys) is present on C1. Positions 1-109 (CGFSTVGSGF…PNAQCVKQEE (109 aa)) are head. One can recognise an IF rod domain in the interval 109-420 (EKEQIKCLNN…RLLEGEEQRL (312 aa)). A coil 1A region spans residues 110 to 144 (KEQIKCLNNRFAAFIDKVRFLEQQNKLLETKLQFF). The interval 145–154 (QNRQCCESNL) is linker 1. The tract at residues 155-255 (EPLFEGYIET…YQEEIRVLQA (101 aa)) is coil 1B. Residues 256–272 (NISDTSVIVKMDNSRDL) are linker 12. Positions 273–416 (NMDCIVAEIK…ATYRRLLEGE (144 aa)) are coil 2. The tail stretch occupies residues 417 to 491 (EQRLCEGVGA…GGGSCSLGRC (75 aa)).

Belongs to the intermediate filament family.

In terms of biological role, wool microfibrillar keratin. This is Keratin, type II microfibrillar, component 7C from Ovis aries (Sheep).